The primary structure comprises 583 residues: Ankyrin repeat-containing protein NPR4 (583 aa).

ANK repeat units follow at residues 68 to 97 (HNDTDLHVAARGGDAGALRRALDEAAAAVA), 119 to 148 (AGETPLVAAAERGHLEVVRELLRHLDAEGV), 154 to 183 (SGYDALHVAAREGRHAVVQEMLLHNRLLAK), 188 to 218 (ANTSPLISAATRGHTEVVKLLLELDDFGLVE), 223 to 252 (NGKNSLHFAARQGHVEIVKALLEKDPQLAR), 257 to 286 (KGQTALHMAVKGTNCDVLRALVDADPAIVM), and 291 to 321 (NGNTALHVATRKKRAEIVAVLLRLPDTHVNA). The next 4 membrane-spanning stretches (helical) occupy residues 414–434 (VTVVAVLFATVAFAAIFTVPG), 452–472 (IFFIFNAIALFTSLAVVVVQI), 492–512 (LMWLASVCTTISFIASCYIVL), and 518–538 (WAALLVSLIGGITMAGVLGTM).

The protein resides in the cell membrane. Involved in salt stress tolerance. The protein is Ankyrin repeat-containing protein NPR4 of Oryza sativa subsp. japonica (Rice).